We begin with the raw amino-acid sequence, 1049 residues long: RTX-III toxin determinant A from serotype 2 (1049 aa).

Helical transmembrane passes span 154–170 (TIIS…LAGI), 315–331 (ALIA…LAFL), and 397–413 (LVGA…TGLI). 6 Hemolysin-type calcium-binding repeats span residues 743-760 (KGSK…DDLL), 761-778 (NGND…NDEL), 779-796 (RGDN…DDKL), 797-814 (LGGN…NDEL), 825-842 (RGGK…SDLL), and 843-860 (DGGE…SDFY).

This sequence belongs to the RTX prokaryotic toxin (TC 1.C.11) family. Palmitoylated by ApxIIIC. The toxin only becomes active when modified.

It localises to the secreted. It is found in the host cell membrane. Does not have hemolytic activity but shows a strong cytotoxicity towards alveolar macrophages and neutrophils. The protein is RTX-III toxin determinant A from serotype 2 (apxIIIA) of Actinobacillus pleuropneumoniae (Haemophilus pleuropneumoniae).